Here is a 701-residue protein sequence, read N- to C-terminus: MSEKATGEVEAELPEHPDADERRRWQELADEVREHQFRYYVKDAPIISDAEFDKLLRELQALEDAHPELRTPDSPTQLVGGAGFATEFAPAEHLERMLSLDNVFDSDELTAWAARISSETGDAAHFLCELKIDGVALSLVYRDGRLERGATRGDGRTGEDVTLNARTIDDIPERLTPSDEFPVPAVLEVRGEVFFRVADFEELNAGLVAEGKPPFANPRNSAAGSLRQKNPAVTARRKLRMICHGIGYTEGFTPASLHDAYRALGAWGLPVSEHTTKVSTVAEVAERIAYWGEHRHDVEHEIDGVVVKVDEVALQRRLGATSRAPRWAVAYKYPPEEATTKLLDIRVNVGRTGRVTPFAYMEPVKVAGSTVGLATLHNASEVKRKGVLIGDTVVIRKAGDVIPEVLGPVVDLRDGTEREFEFPTHCPECGTELAPAKEGDADIRCPNSRSCPAQLRERLFHLAGRGAFDIEGLGYEAATALLAAQVIPDEGDLFTLTADDLLRTELFTTKKGELSANGKRLLANLTKAKEQPLWRVLVALSIRHVGPTAARALATEFGSLEAIEAASEEELAAVEGVGPTIAAAVKDWFTVDWHRAIVDKWRAAGVRMADERDASIERTLEGLSIVVTGSLAGFSRDQAKEAIIARGGKAAGSVSKKTAYVVAGDAPGSKYDKAVELGVPVLDEDGFRRLLEQGPPVEPAE.

Residues Met1 to Arg23 form a disordered region. NAD(+) contacts are provided by residues Asp49–Asp53, Ser99–Leu100, and Glu129. The active-site N6-AMP-lysine intermediate is the Lys131. Residues Arg152, Glu192, Lys308, and Lys332 each coordinate NAD(+). Cys426, Cys429, Cys445, and Cys451 together coordinate Zn(2+). The region spanning Ser615–Glu701 is the BRCT domain.

This sequence belongs to the NAD-dependent DNA ligase family. LigA subfamily. Mg(2+) is required as a cofactor. Mn(2+) serves as cofactor.

The enzyme catalyses NAD(+) + (deoxyribonucleotide)n-3'-hydroxyl + 5'-phospho-(deoxyribonucleotide)m = (deoxyribonucleotide)n+m + AMP + beta-nicotinamide D-nucleotide.. Functionally, DNA ligase that catalyzes the formation of phosphodiester linkages between 5'-phosphoryl and 3'-hydroxyl groups in double-stranded DNA using NAD as a coenzyme and as the energy source for the reaction. It is essential for DNA replication and repair of damaged DNA. Probably the only ligase required for non-homologous end joining (NHEJ) repair of 3-overhangs. In Mycolicibacterium smegmatis (strain ATCC 700084 / mc(2)155) (Mycobacterium smegmatis), this protein is DNA ligase A.